Reading from the N-terminus, the 173-residue chain is ATP synthase subunit b (173 aa).

Residues 15 to 35 (GVEWGTVIVQVLTFIVLLALL) form a helical membrane-spanning segment.

Belongs to the ATPase B chain family. As to quaternary structure, F-type ATPases have 2 components, F(1) - the catalytic core - and F(0) - the membrane proton channel. F(1) has five subunits: alpha(3), beta(3), gamma(1), delta(1), epsilon(1). F(0) has three main subunits: a(1), b(2) and c(10-14). The alpha and beta chains form an alternating ring which encloses part of the gamma chain. F(1) is attached to F(0) by a central stalk formed by the gamma and epsilon chains, while a peripheral stalk is formed by the delta and b chains.

Its subcellular location is the cell membrane. Its function is as follows. F(1)F(0) ATP synthase produces ATP from ADP in the presence of a proton or sodium gradient. F-type ATPases consist of two structural domains, F(1) containing the extramembraneous catalytic core and F(0) containing the membrane proton channel, linked together by a central stalk and a peripheral stalk. During catalysis, ATP synthesis in the catalytic domain of F(1) is coupled via a rotary mechanism of the central stalk subunits to proton translocation. Component of the F(0) channel, it forms part of the peripheral stalk, linking F(1) to F(0). The sequence is that of ATP synthase subunit b from Staphylococcus aureus (strain MRSA252).